A 52-amino-acid polypeptide reads, in one-letter code: Large ribosomal subunit protein bL32c (52 aa).

It belongs to the bacterial ribosomal protein bL32 family.

It is found in the plastid. The protein resides in the chloroplast. This chain is Large ribosomal subunit protein bL32c, found in Arabis hirsuta (Hairy rock-cress).